A 98-amino-acid polypeptide reads, in one-letter code: Peptide YY (98 aa).

Positions 1-28 are cleaved as a signal peptide; it reads MVAVRRPWPVTVAMLLILLACLGALVDA. At Ser-41 the chain carries Phosphoserine. Tyr-64 carries the tyrosine amide modification. The propeptide occupies 68-98; the sequence is DVPAALFSKLLFTDDSDSENLPFRPEGLDQW.

It belongs to the NPY family. The peptide YY form is cleaved at Pro-30 by the prolyl endopeptidase FAP (seprase) activity (in vitro) to generate peptide YY(3-36).

The protein localises to the secreted. In terms of biological role, this gut peptide inhibits exocrine pancreatic secretion, has a vasoconstrictory action and inhibitis jejunal and colonic mobility. The sequence is that of Peptide YY (Pyy) from Mus musculus (Mouse).